We begin with the raw amino-acid sequence, 217 residues long: 3-demethoxyubiquinol 3-hydroxylase (217 aa).

The Fe cation site is built by Glu-66, Glu-96, His-99, Glu-148, Glu-180, and His-183.

This sequence belongs to the COQ7 family. It depends on Fe cation as a cofactor.

The protein resides in the cell membrane. It catalyses the reaction a 5-methoxy-2-methyl-3-(all-trans-polyprenyl)benzene-1,4-diol + AH2 + O2 = a 3-demethylubiquinol + A + H2O. The protein operates within cofactor biosynthesis; ubiquinone biosynthesis. Functionally, catalyzes the hydroxylation of 2-nonaprenyl-3-methyl-6-methoxy-1,4-benzoquinol during ubiquinone biosynthesis. The sequence is that of 3-demethoxyubiquinol 3-hydroxylase from Xylella fastidiosa (strain Temecula1 / ATCC 700964).